Consider the following 709-residue polypeptide: MLNPIVRKFQYGQHTVAIETGMMARQATAAVMVNMDDTAVFVTVVGQKKVKEGQDFFPLTVNYQERTYAAGRVPGSFFRREGRPGEGETLVARLIDRPLRPLFPDGFLNEVQIVATVVSVNPQVNPDIVAMIGASAVLALSGIPFNGPIGAARVGYINDQYVLNPTSDELKNSRLDLVVSGTAGAVLMVESEADILTEEQMLGAVVFGHEQQQVVIDNINALAAEAGKEKWNWVPESVNQALHDRVAGLAEDRLGDAYRITEKQERYAQVDAIKEEVTAALLEQDEALEEAEIHEILGSLEKKVVRSRVLRGEPRIDGREKDMVRALDVRTGVLPRTHGSALFTRGETQALVTATLGTERDAQIIDELMGERTDRFLLHYNFPPYSVGETGMMGSPKRREIGHGRLAKRGVAAVMPKANEFPYTVRVVSEITESNGSSSMASVCGASLALMDAGVPIKAAVAGIAMGLVKEDDNFVVLSDILGDEDHLGDMDFKVAGSCEGISALQMDIKIEGITREIMQIALNQAKGARLHILSVMEQAINSPRNDISEFAPRIHTIKINPDKIKDVIGKGGSVIRALTEETGTTIEIEDDGTVKIAATDGEKAKHAISRIEEITAEIEVARIYTGKVTRIVDFGAFVAIGGGKEGLVHISQIADKRVEKVADYLQVGQEVSVKVLEIDRQGRVRLSIKEATVGVIVEDTPVAPQSAE.

Residues Asp486 and Asp492 each contribute to the Mg(2+) site. In terms of domain architecture, KH spans 553 to 612; the sequence is PRIHTIKINPDKIKDVIGKGGSVIRALTEETGTTIEIEDDGTVKIAATDGEKAKHAISRI. In terms of domain architecture, S1 motif spans 622 to 690; that stretch reads ARIYTGKVTR…RQGRVRLSIK (69 aa).

Belongs to the polyribonucleotide nucleotidyltransferase family. As to quaternary structure, component of the RNA degradosome, which is a multiprotein complex involved in RNA processing and mRNA degradation. Mg(2+) serves as cofactor.

The protein resides in the cytoplasm. The catalysed reaction is RNA(n+1) + phosphate = RNA(n) + a ribonucleoside 5'-diphosphate. Involved in mRNA degradation. Catalyzes the phosphorolysis of single-stranded polyribonucleotides processively in the 3'- to 5'-direction. This chain is Polyribonucleotide nucleotidyltransferase, found in Photorhabdus laumondii subsp. laumondii (strain DSM 15139 / CIP 105565 / TT01) (Photorhabdus luminescens subsp. laumondii).